Consider the following 169-residue polypeptide: Macrocypin-1a (169 aa).

It belongs to the protease inhibitor I85 family.

Its function is as follows. Inhibits papain and cysteine cathepsin endopeptidases, and also inhibits cathepsins B and H, which exhibit both exopeptidase and endopeptidase activities. The protein is Macrocypin-1a of Macrolepiota procera (Parasol mushroom).